Reading from the N-terminus, the 478-residue chain is ATP synthase subunit beta (478 aa).

Residue 160-167 participates in ATP binding; that stretch reads GGAGVGKT.

This sequence belongs to the ATPase alpha/beta chains family. As to quaternary structure, F-type ATPases have 2 components, CF(1) - the catalytic core - and CF(0) - the membrane proton channel. CF(1) has five subunits: alpha(3), beta(3), gamma(1), delta(1), epsilon(1). CF(0) has three main subunits: a(1), b(2) and c(9-12). The alpha and beta chains form an alternating ring which encloses part of the gamma chain. CF(1) is attached to CF(0) by a central stalk formed by the gamma and epsilon chains, while a peripheral stalk is formed by the delta and b chains.

The protein resides in the cell inner membrane. The enzyme catalyses ATP + H2O + 4 H(+)(in) = ADP + phosphate + 5 H(+)(out). Its function is as follows. Produces ATP from ADP in the presence of a proton gradient across the membrane. The catalytic sites are hosted primarily by the beta subunits. The protein is ATP synthase subunit beta of Orientia tsutsugamushi (strain Ikeda) (Rickettsia tsutsugamushi).